Here is a 226-residue protein sequence, read N- to C-terminus: uncharacterized protein (226 aa).

Residues 4–226 form the ABC transporter domain; the sequence is LQFQQVGYWY…FTVKENVAVV (223 aa). Residue 38–45 coordinates ATP; sequence GTSGTGKT.

It belongs to the ABC transporter superfamily.

This is an uncharacterized protein from Bacillus subtilis (strain 168).